A 595-amino-acid chain; its full sequence is MDSAAGGGGLTAIRLPYRHLRDAEMELVSLNGGTPRGGSPKDPDATHQQGPPAARTTTTRKLVLACMVAAGVQFGWALQLSLLTPYIQTLGIDHAMASFIWLCGPITGFVVQPCVGVWSDKCRSKYGRRRPFILAGCLMICFAVTLIGFSADLGYILGDTTEHCSTYKGSRFRAAIIFVLGFWMLDLANNTVQGPARALLADLSGPDQCNSANAIFCTWMAVGNVLGFSSGASGNWHKWFPFLMTRACCEACSNLKAAFLVAVVFLLFCMSVTLYFAEEIPLEPTDAQRLSDSAPLLNGSRDDNNASNEPRNGALPNGHTDGSNVPANSNAEDSNSNRENVEVFNDGPGAVLVNILTSMRHLPPGMYSVLLVMALTWLSWFPFFLFDTDWMGREVYHGDPNGNLSERKAYDNGVREGAFGLLLNSVVLGIGSFLVDPLCRLMGARLVWAISNFTVFICMLATAILSWISFDLYSSKLHHIIGANKTVKNSALIVFSLLGLPLSITYSVPFSVTAELTAGTGGGQGLATGVLNLAIVVPQIVVSLGAGPWDALFGGGNVPAFALASVFSLGAGVLAVLKLPKLPNSYRSAGFHGFG.

The Cytoplasmic portion of the chain corresponds to 1–61 (MDSAAGGGGL…PAARTTTTRK (61 aa)). Positions 29–55 (SLNGGTPRGGSPKDPDATHQQGPPAAR) are disordered. The chain crosses the membrane as a helical span at residues 62-82 (LVLACMVAAGVQFGWALQLSL). The Extracellular portion of the chain corresponds to 83 to 97 (LTPYIQTLGIDHAMA). The helical transmembrane segment at 98 to 118 (SFIWLCGPITGFVVQPCVGVW) threads the bilayer. Over 119-130 (SDKCRSKYGRRR) the chain is Cytoplasmic. Residues 131–151 (PFILAGCLMICFAVTLIGFSA) traverse the membrane as a helical segment. Over 152 to 173 (DLGYILGDTTEHCSTYKGSRFR) the chain is Extracellular. Residues 174–194 (AAIIFVLGFWMLDLANNTVQG) form a helical membrane-spanning segment. At 195–213 (PARALLADLSGPDQCNSAN) the chain is on the cytoplasmic side. Residues 214–234 (AIFCTWMAVGNVLGFSSGASG) traverse the membrane as a helical segment. The Extracellular portion of the chain corresponds to 235-256 (NWHKWFPFLMTRACCEACSNLK). Residues 257–277 (AAFLVAVVFLLFCMSVTLYFA) form a helical membrane-spanning segment. Over 278–365 (EEIPLEPTDA…LTSMRHLPPG (88 aa)) the chain is Cytoplasmic. A disordered region spans residues 291–340 (SDSAPLLNGSRDDNNASNEPRNGALPNGHTDGSNVPANSNAEDSNSNREN). Residues 320-334 (TDGSNVPANSNAEDS) are compositionally biased toward polar residues. The chain crosses the membrane as a helical span at residues 366–386 (MYSVLLVMALTWLSWFPFFLF). The Extracellular portion of the chain corresponds to 387-417 (DTDWMGREVYHGDPNGNLSERKAYDNGVREG). N-linked (GlcNAc...) asparagine glycosylation occurs at asparagine 403. A helical transmembrane segment spans residues 418–438 (AFGLLLNSVVLGIGSFLVDPL). Over 439–447 (CRLMGARLV) the chain is Cytoplasmic. Residues 448–468 (WAISNFTVFICMLATAILSWI) form a helical membrane-spanning segment. The Extracellular portion of the chain corresponds to 469 to 491 (SFDLYSSKLHHIIGANKTVKNSA). The N-linked (GlcNAc...) asparagine glycan is linked to asparagine 484. A helical transmembrane segment spans residues 492–512 (LIVFSLLGLPLSITYSVPFSV). Residues 513-525 (TAELTAGTGGGQG) are Cytoplasmic-facing. Residues 526–546 (LATGVLNLAIVVPQIVVSLGA) traverse the membrane as a helical segment. At 547–556 (GPWDALFGGG) the chain is on the extracellular side. A helical transmembrane segment spans residues 557–577 (NVPAFALASVFSLGAGVLAVL). The Cytoplasmic portion of the chain corresponds to 578–595 (KLPKLPNSYRSAGFHGFG).

It belongs to the glycoside-pentoside-hexuronide (GPH) cation symporter transporter (TC 2.A.2.4) family. Homodimer.

It is found in the cell membrane. The protein operates within glycan biosynthesis; sucrose metabolism. Its function is as follows. Responsible for the transport of sucrose into the cell, with the concomitant uptake of protons (symport system). May also transport other glucosides. The polypeptide is Sucrose transport protein SUT4 (SUT4) (Oryza sativa subsp. indica (Rice)).